Consider the following 179-residue polypeptide: Large ribosomal subunit protein uL5 (179 aa).

Belongs to the universal ribosomal protein uL5 family. As to quaternary structure, part of the 50S ribosomal subunit; part of the 5S rRNA/L5/L18/L25 subcomplex. Contacts the 5S rRNA and the P site tRNA. Forms a bridge to the 30S subunit in the 70S ribosome.

Functionally, this is one of the proteins that bind and probably mediate the attachment of the 5S RNA into the large ribosomal subunit, where it forms part of the central protuberance. In the 70S ribosome it contacts protein S13 of the 30S subunit (bridge B1b), connecting the 2 subunits; this bridge is implicated in subunit movement. Contacts the P site tRNA; the 5S rRNA and some of its associated proteins might help stabilize positioning of ribosome-bound tRNAs. The chain is Large ribosomal subunit protein uL5 from Rickettsia rickettsii (strain Iowa).